A 197-amino-acid chain; its full sequence is Holliday junction branch migration complex subunit RuvA (197 aa).

The tract at residues 1–64 is domain I; the sequence is MIARLAGKVA…QDAIELYGFA (64 aa). Residues 65–141 form a domain II region; it reads SEDEEAVFRA…LALLARAAGP (77 aa). The flexible linker stretch occupies residues 141–145; sequence PARAK. The domain III stretch occupies residues 146–197; the sequence is PGAGVVEQLRQALVNLGYKPPQADAAADALRDEAEGKKLDELLREALKRLRG.

Belongs to the RuvA family. In terms of assembly, homotetramer. Forms an RuvA(8)-RuvB(12)-Holliday junction (HJ) complex. HJ DNA is sandwiched between 2 RuvA tetramers; dsDNA enters through RuvA and exits via RuvB. An RuvB hexamer assembles on each DNA strand where it exits the tetramer. Each RuvB hexamer is contacted by two RuvA subunits (via domain III) on 2 adjacent RuvB subunits; this complex drives branch migration. In the full resolvosome a probable DNA-RuvA(4)-RuvB(12)-RuvC(2) complex forms which resolves the HJ.

Its subcellular location is the cytoplasm. Functionally, the RuvA-RuvB-RuvC complex processes Holliday junction (HJ) DNA during genetic recombination and DNA repair, while the RuvA-RuvB complex plays an important role in the rescue of blocked DNA replication forks via replication fork reversal (RFR). RuvA specifically binds to HJ cruciform DNA, conferring on it an open structure. The RuvB hexamer acts as an ATP-dependent pump, pulling dsDNA into and through the RuvAB complex. HJ branch migration allows RuvC to scan DNA until it finds its consensus sequence, where it cleaves and resolves the cruciform DNA. In Anaeromyxobacter sp. (strain Fw109-5), this protein is Holliday junction branch migration complex subunit RuvA.